The sequence spans 40 residues: Ice-structuring protein GS-8 (40 aa).

At M1 the chain carries Blocked amino end (Met).

The protein belongs to the type-I AFP family.

In terms of biological role, antifreeze proteins lower the blood freezing point. The polypeptide is Ice-structuring protein GS-8 (Myoxocephalus aenaeus (Grubby sculpin)).